A 432-amino-acid chain; its full sequence is Peptidase B (432 aa).

Positions 196 and 201 each coordinate Mn(2+). Lysine 208 is a catalytic residue. Mn(2+)-binding residues include aspartate 219, aspartate 278, and glutamate 280. The active site involves arginine 282.

The protein belongs to the peptidase M17 family. Homohexamer. Mn(2+) is required as a cofactor.

The protein localises to the cytoplasm. The enzyme catalyses Release of an N-terminal amino acid, Xaa, from a peptide or arylamide. Xaa is preferably Glu or Asp but may be other amino acids, including Leu, Met, His, Cys and Gln.. In terms of biological role, probably plays an important role in intracellular peptide degradation. The chain is Peptidase B from Vibrio vulnificus (strain CMCP6).